The primary structure comprises 190 residues: High affinity copper uptake protein 1 (190 aa).

Residues 1–35 (MDHSHHMGMSYMDSNSTMQPSHHHPTTSASHSHGG) form a disordered region. Over 1 to 61 (MDHSHHMGMS…KNVELLFSGL (61 aa)) the chain is Extracellular. The short motif at 5-6 (HH) is the Bis-His motif element. A Methionine segments (Mets) motif motif is present at residues 7-12 (MGMSYM). N-linked (GlcNAc...) asparagine glycosylation occurs at Asn-15. Residues 26–35 (TTSASHSHGG) show a composition bias toward low complexity. Residue Thr-27 is glycosylated (O-linked (GalNAc...) threonine). Residues 62–82 (VINTAGEMAGAFVAVFLLAMF) traverse the membrane as a helical segment. The Cytoplasmic portion of the chain corresponds to 83–132 (YEGLKIARESLLRKSQVSIRYNSMPVPGPNGTILMETHKTVGQQMLSFPH). A Phosphothreonine modification is found at Thr-114. The helical transmembrane segment at 133–153 (LLQTVLHIIQVVISYFLMLIF) threads the bilayer. The Extracellular portion of the chain corresponds to 154–156 (MTY). Residues 157–177 (NGYLCIAVAAGAGTGYFLFSW) traverse the membrane as a helical segment. Topologically, residues 178–190 (KKAVVVDITEHCH) are cytoplasmic. Cys-189 is modified (cysteine sulfenic acid (-SOH)).

The protein belongs to the copper transporter (Ctr) (TC 1.A.56) family. SLC31A subfamily. In terms of assembly, homotrimer; is stabilized by cisplatin via interactions between cisplatin and the methionine-rich clusters, and could be crucial for the copper(2+) reduction process and copper(1+) stabilization. Heterotrimer between SLC31A1, CCS and SOD1; this heterotrimer is copper(1+)-mediated and its maintenance is regulated through SOD1 activation. Interacts with KDR; this interaction is induced upon VEGFA stimulation leading to SLC31A1 and KDR subsequent co-internalization to early endosomes, thereby activating KDR downstream signaling in endothelial cells. Interacts (via C-terminal domain) with ATOX1 (via dimer form); this interaction improves ATOX1 stability and controls intracellular copper(1+) levels. Interacts with SLC31A2; this interaction stabilizes SLC31A2 and protects its from ubiquitination and degradation. Interacts (via C-terminal domain) with CCS; this interaction is copper(1+)-mediated. O-Glycosylation at Thr-27 protects from proteolytic cleavage in the N-terminal extracellular domain. In terms of processing, proteolytic cleavage, leading to a truncated form, is facilitated by SLC31A2 and initiated preferentially by CTSL and to a minor extend by CTSB in endolysosomal compartments. In vitro, is cleaved by CTSL/cathepsin L between residues 8 and 9 from the amino terminus. A post-CTSL/cathepsin L processing occurs to yield to the fully truncated form. Post-translationally, sulfenylated at Cys-189 after stimulation with VEGFA, which induces SLC31A1-KDR disulfide bond formation and their co-internalization to early endosomes, driving to a sustained VEGFR2 signaling.

Its subcellular location is the cell membrane. The protein localises to the early endosome membrane. It is found in the recycling endosome membrane. It localises to the apical cell membrane. The protein resides in the late endosome membrane. Its subcellular location is the basolateral cell membrane. The catalysed reaction is Ag(+)(out) = Ag(+)(in). It catalyses the reaction Cu(+)(out) = Cu(+)(in). Its activity is regulated as follows. Copper(1+) transport is stimulated by extracellular acidic pH and high potassium ions concentrations. Copper(1+) import is regulated by a copper(1+)-dependent recycling of SLC31A1. Uniporter that mediates the transport of copper(1+) from the extracellular space to the cytoplasm, across the plasma membrane and delivers directly copper(1+) to specific chaperone such as ATOX1, via a copper(1+)- mediated transient interaction between the C-terminal domain and a copper(1+) chaperone, thus controlling intracellular copper(1+) levels. May function in copper(1+) import from the apical membrane thus may drive intestinal copper absorption. The copper(1+) transport mechanism is sodium-independent, saturable and of high-affinity. Also mediates the uptake of silver(1+). May function in the influx of the platinum-containing chemotherapeutic agents. The platinum-containing chemotherapeutic agents uptake is saturable. In vitro, mediates the transport of cadmium(2+) into cells. Also participates in the first step of copper(2+) acquisition by cells through a direct transfer of copper(2+) from copper(2+) carriers in blood, such as ALB to the N-terminal domain of SLC31A1, leading to copper(2+) reduction and probably followed by copper(1+) stabilization. In addition, functions as a redox sensor to promote angiogenesis in endothelial cells, in a copper(1+) transport independent manner, by transmitting the VEGF-induced ROS signal through a sulfenylation at Cys-189 leadin g to a subsequent disulfide bond formation between SLC31A1 and KDR. The SLC31A1-KDR complex is then co-internalized to early endosomes, driving a sustained VEGFR2 signaling. In terms of biological role, mobilizes copper(1+) out of the endosomal compartment, making copper(1+) available for export out of the cells. This chain is High affinity copper uptake protein 1, found in Homo sapiens (Human).